A 33-amino-acid chain; its full sequence is uncharacterized protein (33 aa).

A disordered region spans residues 1 to 33 (MQPGTGLSFDISQILKQGSDPKQKLPERQAIVL).

This is an uncharacterized protein from Caenorhabditis elegans.